Consider the following 1081-residue polypeptide: Probable sucrose-phosphate synthase 2 (1081 aa).

Disordered stretches follow at residues 116–152 (EQGR…PRGN), 239–267 (EPTE…EDLG), and 760–780 (IKRQ…GDVP). Residues 256-267 (EPEEEEEEEDLG) are compositionally biased toward acidic residues.

This sequence belongs to the glycosyltransferase 1 family. Homodimer or homotetramer.

The enzyme catalyses beta-D-fructose 6-phosphate + UDP-alpha-D-glucose = sucrose 6(F)-phosphate + UDP + H(+). The protein operates within glycan biosynthesis; sucrose biosynthesis; sucrose from D-fructose 6-phosphate and UDP-alpha-D-glucose: step 1/2. With respect to regulation, activity is regulated by phosphorylation and moderated by concentration of metabolites and light. In terms of biological role, plays a role in photosynthetic sucrose synthesis by catalyzing the rate-limiting step of sucrose biosynthesis from UDP-glucose and fructose- 6-phosphate. Involved in the regulation of carbon partitioning in the leaves of plants. May regulate the synthesis of sucrose and therefore play a major role as a limiting factor in the export of photoassimilates out of the leaf. Plays a role for sucrose availability that is essential for plant growth and fiber elongation. The chain is Probable sucrose-phosphate synthase 2 (SPS2) from Craterostigma plantagineum (Blue gem).